A 1401-amino-acid polypeptide reads, in one-letter code: DNA-directed RNA polymerase subunit beta (1401 aa).

It belongs to the RNA polymerase beta chain family. As to quaternary structure, the RNAP catalytic core consists of 2 alpha, 1 beta, 1 beta' and 1 omega subunit. When a sigma factor is associated with the core the holoenzyme is formed, which can initiate transcription.

The catalysed reaction is RNA(n) + a ribonucleoside 5'-triphosphate = RNA(n+1) + diphosphate. Functionally, DNA-dependent RNA polymerase catalyzes the transcription of DNA into RNA using the four ribonucleoside triphosphates as substrates. The polypeptide is DNA-directed RNA polymerase subunit beta (Zymomonas mobilis subsp. mobilis (strain ATCC 31821 / ZM4 / CP4)).